Here is a 58-residue protein sequence, read N- to C-terminus: Large ribosomal subunit protein bL32 (58 aa).

It belongs to the bacterial ribosomal protein bL32 family.

This Limosilactobacillus fermentum (strain NBRC 3956 / LMG 18251) (Lactobacillus fermentum) protein is Large ribosomal subunit protein bL32.